Consider the following 78-residue polypeptide: uncharacterized protein (78 aa).

Residues 58–78 (EANDPEKKIPSTAAKAISLSP) are disordered.

This is an uncharacterized protein from Vaccinia virus (strain Copenhagen) (VACV).